The chain runs to 103 residues: MTGRGKGGKGLGKGGAKRHRKILRDNIQGITKPAIRRLARRGGVKRISAMIYEETRGVLKTFLEGVIRDAVTYTEHAKRKTVTSLDVVYALKRQGRTLYGFGG.

Positions Met1–Gly14 are enriched in gly residues. The segment at Met1–Arg20 is disordered. Lys6 is subject to N6-acetyl-N6-methyllysine; alternate. Lys6, Lys9, and Lys13 each carry N6-methyllysine; alternate. Lys13 carries the post-translational modification N6-acetyl-N6-methyllysine; alternate. The DNA-binding element occupies Lys17 to Lys21. Lys92 is subject to N6-glutaryllysine.

This sequence belongs to the histone H4 family. As to quaternary structure, the nucleosome is a histone octamer containing two molecules each of H2A, H2B, H3 and H4 assembled in one H3-H4 heterotetramer and two H2A-H2B heterodimers. The octamer wraps approximately 147 bp of DNA. Post-translationally, glutarylation at Lys-92 (H4K91glu) destabilizes nucleosomes by promoting dissociation of the H2A-H2B dimers from nucleosomes.

The protein localises to the nucleus. It localises to the chromosome. In terms of biological role, core component of nucleosome. Nucleosomes wrap and compact DNA into chromatin, limiting DNA accessibility to the cellular machineries which require DNA as a template. Histones thereby play a central role in transcription regulation, DNA repair, DNA replication and chromosomal stability. DNA accessibility is regulated via a complex set of post-translational modifications of histones, also called histone code, and nucleosome remodeling. The polypeptide is Histone H4 (hH4-1) (Neurospora crassa (strain ATCC 24698 / 74-OR23-1A / CBS 708.71 / DSM 1257 / FGSC 987)).